A 118-amino-acid chain; its full sequence is Large ribosomal subunit protein uL18 (118 aa).

This sequence belongs to the universal ribosomal protein uL18 family. As to quaternary structure, part of the 50S ribosomal subunit; part of the 5S rRNA/L5/L18/L25 subcomplex. Contacts the 5S and 23S rRNAs.

Functionally, this is one of the proteins that bind and probably mediate the attachment of the 5S RNA into the large ribosomal subunit, where it forms part of the central protuberance. The polypeptide is Large ribosomal subunit protein uL18 (Ligilactobacillus salivarius (strain UCC118) (Lactobacillus salivarius)).